A 635-amino-acid chain; its full sequence is Peptidyl-prolyl cis-trans isomerase PASTICCINO1 (635 aa).

The span at 1-10 (MAVGDQTEQN) shows a compositional bias: polar residues. The disordered stretch occupies residues 1-28 (MAVGDQTEQNYLPKKKKSETEDDKRRKK). PPIase FKBP-type domains follow at residues 51–147 (GDQV…LDFS), 175–260 (PYEV…VHFI), and 291–383 (DSRL…LGFE). TPR repeat units follow at residues 400–433 (ADKIRSTGNRLFKEGKFELAKAKYEKVLREFNHV), 449–482 (NMLHLNVAACLLKMGEWRKSIETCNKVLEAKPGH), and 483–516 (VKGLYRRGMAYIAGGEYDDARNDFNMMIKVDKSS). The tract at residues 530–546 (KEQEAESKARKQFKGLF) is calmodulin-binding. Acidic residues predominate over residues 569–586 (EVDETKDNDDDETLEEEG). The tract at residues 569 to 593 (EVDETKDNDDDETLEEEGATTVSTE) is disordered. The helical; Anchor for type IV membrane protein transmembrane segment at 609–629 (VMLQIGIQLGVVLIGILIFQF) threads the bilayer.

This sequence belongs to the FKBP-type PPIase family. As to quaternary structure, interacts with calmodulin (CaM). Interacts with RPM1 and NAC089. Interacts with the elongase complex core members KCR1, PAS2 and CER10. In terms of tissue distribution, expressed ubiquitously.

Its subcellular location is the endoplasmic reticulum membrane. It localises to the cytoplasm. It is found in the nucleus. The catalysed reaction is [protein]-peptidylproline (omega=180) = [protein]-peptidylproline (omega=0). Its function is as follows. PPIases accelerate the folding of proteins. It catalyzes the cis-trans isomerization of proline imidic peptide bonds in oligopeptides. Essential protein regulating cell division, adhesion and elongation throughout the plant development and embryogenesis. Required for the spatial organization of apical meristems. Involved in the hormonal control of cell division and differentiation mediated by cytokinins and auxin. Regulates the function of NAC089 transcription factor by controlling its targeting to the nucleus upon plant cell division. Interacts with enzymes of the fatty acid elongase complex and favors the generation of very-long-chain fatty acids (VLCFAs) required for polar auxin transport and tissue patterning during plant development. This Arabidopsis thaliana (Mouse-ear cress) protein is Peptidyl-prolyl cis-trans isomerase PASTICCINO1 (PAS1).